Here is a 1302-residue protein sequence, read N- to C-terminus: Multidrug resistance protein 1 (1302 aa).

Residues 43–63 (GVFEIILLIIGIIGSIGVGCL) traverse the membrane as a helical segment. The ABC transmembrane type-1 1 domain occupies 51–360 (IIGIIGSIGV…ISTPINILNS (310 aa)). Residue asparagine 83 is glycosylated (N-linked (GlcNAc...) asparagine). 5 helical membrane-spanning segments follow: residues 118-138 (LYFA…FFVL), 192-212 (LFQT…KCWD), 213-233 (LTLV…GLGM), 292-312 (IGIG…NALG), and 331-351 (AGTV…LSQI). Positions 395–634 (IRFEDVQFVY…KGTYYGLVKR (240 aa)) constitute an ABC transporter 1 domain. 430-437 (GASGCGKS) provides a ligand contact to ATP. N-linked (GlcNAc...) asparagine glycosylation is present at asparagine 663. The chain crosses the membrane as a helical span at residues 712–732 (YIFCTLGLIGGIGAGAAFPFY). The region spanning 713–1022 (IFCTLGLIGG…IGNVLPDVGK (310 aa)) is the ABC transmembrane type-1 2 domain. Asparagine 751 is a glycosylation site (N-linked (GlcNAc...) asparagine). The chain crosses the membrane as a helical span at residues 765–785 (MIIICIGIITMISFFCYVGLF). N-linked (GlcNAc...) asparagine glycosylation is present at asparagine 808. The next 2 membrane-spanning stretches (helical) occupy residues 841 to 861 (VGDI…GLYF) and 862 to 882 (SWKL…FMFI). The region spanning 1057 to 1296 (IEFKNIHFRY…KGFYYTLAMQ (240 aa)) is the ABC transporter 2 domain. Residue 1092 to 1099 (GASGCGKS) coordinates ATP.

Belongs to the ABC transporter superfamily. ABCB family. Multidrug resistance exporter (TC 3.A.1.201) subfamily.

It localises to the membrane. The enzyme catalyses ATP + H2O + xenobioticSide 1 = ADP + phosphate + xenobioticSide 2.. Energy-dependent efflux pump responsible for decreased drug accumulation in multidrug resistance parasites. The polypeptide is Multidrug resistance protein 1 (Entamoeba histolytica (strain ATCC 30459 / HM-1:IMSS / ABRM)).